The following is a 438-amino-acid chain: Putative F-box protein At5g15660 (438 aa).

The disordered stretch occupies residues 1–24 (MRRRSKKIKTENNSNPETSEERNK). Residues 22 to 68 (RNKFDEIPHDLVIEILERLPLKSVARFLTVSKLWATTIRSPDFRKSY) form the F-box domain.

The protein is Putative F-box protein At5g15660 of Arabidopsis thaliana (Mouse-ear cress).